Reading from the N-terminus, the 1022-residue chain is Protein trachealess (1022 aa).

One can recognise a bHLH domain in the interval 86-139; it reads LRKEKSRDAARSRRGKENYEFYELAKMLPLPAAITSQLDKASIIRLTISYLKLR. Residues 174–244 form the PAS 1 domain; that stretch reads EQHQGTHILQ…DQLGLSLTSG (71 aa). The disordered stretch occupies residues 239-289; the sequence is LSLTSGGGGGGGSSSSGGGGGGAGGGMASPTSGASDDGSGTHGTNNPDVAA. A compositionally biased stretch (gly residues) spans 243-265; it reads SGGGGGGGSSSSGGGGGGAGGGM. Over residues 280–289 the composition is skewed to polar residues; sequence HGTNNPDVAA. Residues 391–461 enclose the PAS 2 domain; the sequence is PPPSVHEIRL…KSHSDLIEKG (71 aa). Residues 465–508 enclose the PAC domain; that stretch reads TGYYRLMNKSGGYTWLQTCATVVCSTKNADEQNIICVNYVISNR. Disordered stretches follow at residues 525 to 686, 849 to 896, and 962 to 996; these read DSIK…ADSA, AMTP…GDVV, and DDQG…ASQA. Composition is skewed to low complexity over residues 578–587 and 611–625; these read RSAAASHGSS and PTTV…TPPV. The short motif at 629-636 is the Nuclear localization signal element; it reads KRKRKTKA. Position 673 is a phosphoserine; by PKB/Akt1 (S673). Residues 851–864 are compositionally biased toward polar residues; it reads TPPSSVSPRDSNQP. Residues 987-996 are compositionally biased toward low complexity; it reads GSAGSSASQA.

In terms of assembly, efficient DNA binding requires dimerization with another bHLH protein. Heterodimer with tgo. In terms of processing, ser-673 phosphorylation by PKB/Akt1 is required for nuclear targeting and transcriptional activity. In terms of tissue distribution, trachea, salivary gland ducts, posterior spiracles (Filzkoeper primordia) and a subset of cells in the CNS.

It is found in the nucleus. Transcription factor, master regulator of tracheal cell fates in the embryo, necessary for the development of the salivary gland duct, Malpighian tubules and the posterior spiracles. It may induce a general fate of branched tubular structures of epithelial origin. Functions with tgo to regulate expression of btl. This is Protein trachealess (trh) from Drosophila melanogaster (Fruit fly).